Reading from the N-terminus, the 267-residue chain is Cysteine protease avirulence protein AvrPphB (267 aa).

A lipid anchor (N-myristoyl glycine; by host) is attached at glycine 63. Active-site residues include cysteine 98, histidine 212, and aspartate 227.

This sequence belongs to the peptidase C58 family. In terms of assembly, in infected plant cells, the 28 kDa product interacts with PBS1. Post-translationally, autocleaved. This function is essential for myristoylation in infected plant cell and for eliciting the plant hypersensitive response. Myristoylation of 28 kDa product in infected plant cells; it mediates the localization to membranes.

It is found in the secreted. The protein resides in the host membrane. Its function is as follows. Cysteine protease avirulence protein, which is essential during infection of plant cells from cultivar-specific of beans and Arabidopsis thaliana. The autocleavage of the protein is required for virulence function. May act by affecting the plant defense system. In plants lacking R3 or RPS5 resistance genes, it probably impairs the plant defense system and leads to the bacteria multiplication. In contrast, in plants containing the R3 or RPS5 protein, it is unable to induce disease symptoms, explaining its avirulence name. The 7 kDa product is required for the type-III translocation from Pseudomonas strains to the plant, but are partially dispensable for effector recognition following in planta expression. In infected plants, it acts by cleaving the PBS1 protein, which leads to resistance or disease, depending on the presence or absence of RPS5, respectively. Targets the Arabidopsis kinases PBS1, BIK1, PBL1, PBL2, PBL3, PBL5, PBL7, PBL9 and PBL11 for cleavage in vitro. Can block recognition of AvrB avirulence factor by plant cells by cleaving Arabidopsis RIPK kinase and suppressing Arabidopsis RPM1 activation. Cannot block AvrRpm1-induced activation of RPM1. This is Cysteine protease avirulence protein AvrPphB (avrPph3) from Pseudomonas savastanoi pv. phaseolicola (Pseudomonas syringae pv. phaseolicola).